Reading from the N-terminus, the 876-residue chain is AP-1 complex subunit gamma-1 (876 aa).

9 HEAT repeats span residues 97–135, 136–173, 248–284, 308–345, 346–382, 384–417, 418–454, 506–545, and 560–599; these read DERQ…ICSA, EMAR…KVPD, FLHI…KTES, SLRV…FDDQ, AVQR…ENNV, QLTK…KFSP, EKLW…NASE, VTES…RFPS, and SLLL…ATFN. Residues 756–873 enclose the GAE domain; sequence PAYAPIVAYE…LEEGQVSNFP (118 aa).

Belongs to the adaptor complexes large subunit family. As to quaternary structure, adaptor protein complex 1 (AP-1) is a heterotetramer composed of two large adaptins (gamma-type subunit and beta-type subunit), a medium adaptin (mu-type subunit) and a small adaptin (sigma-type subunit). Binds to EPSIN1. Interacts with DRP2A/ADL6 (via C-terminus).

It is found in the golgi apparatus. The protein localises to the cytoplasmic vesicle. The protein resides in the clathrin-coated vesicle membrane. Its function is as follows. Subunit of clathrin-associated adaptor protein complex 1 that plays a role in protein sorting at the trans-Golgi network and early endosomes (TGN/EE). The AP complexes mediate both the recruitment of clathrin to membranes and the recognition of sorting signals within the cytosolic tails of transmembrane cargo molecules. This chain is AP-1 complex subunit gamma-1 (GAMMA-ADR), found in Arabidopsis thaliana (Mouse-ear cress).